The chain runs to 225 residues: Ribosome maturation factor RimM (225 aa).

The region spanning 144 to 225 (ADEFYWVDLI…RIVVDWEADY (82 aa)) is the PRC barrel domain.

Belongs to the RimM family. Binds ribosomal protein uS19.

It is found in the cytoplasm. An accessory protein needed during the final step in the assembly of 30S ribosomal subunit, possibly for assembly of the head region. Essential for efficient processing of 16S rRNA. May be needed both before and after RbfA during the maturation of 16S rRNA. It has affinity for free ribosomal 30S subunits but not for 70S ribosomes. This Burkholderia lata (strain ATCC 17760 / DSM 23089 / LMG 22485 / NCIMB 9086 / R18194 / 383) protein is Ribosome maturation factor RimM.